Here is a 681-residue protein sequence, read N- to C-terminus: Methionine--tRNA ligase (681 aa).

A 'HIGH' region motif is present at residues 18–28 (PYANGSIHLGH). The Zn(2+) site is built by cysteine 149, cysteine 152, cysteine 162, and cysteine 165. The 'KMSKS' region motif lies at 334–338 (KMSKS). Position 337 (lysine 337) interacts with ATP. One can recognise a tRNA-binding domain in the interval 580 to 681 (DFAKLDLRIV…NGAEPGQRVS (102 aa)).

This sequence belongs to the class-I aminoacyl-tRNA synthetase family. MetG type 1 subfamily. Homodimer. The cofactor is Zn(2+).

It localises to the cytoplasm. It catalyses the reaction tRNA(Met) + L-methionine + ATP = L-methionyl-tRNA(Met) + AMP + diphosphate. In terms of biological role, is required not only for elongation of protein synthesis but also for the initiation of all mRNA translation through initiator tRNA(fMet) aminoacylation. This is Methionine--tRNA ligase from Chromohalobacter salexigens (strain ATCC BAA-138 / DSM 3043 / CIP 106854 / NCIMB 13768 / 1H11).